The chain runs to 639 residues: MQQNIERNQVSMTTSRFVWGAVMALVALGSASAAELNLPDGAALYRARCGTCHDNPQDRTPARDVIARNSPAFIMAAMNGVMAPMAAGLSEAEKQAIALHLGARPAGGSQEINPHAIWGPPSASMPLDGPKCKGKIPPIDLSTPDQWNGWGAGITNARFQPNPGLTAADVPRLKVKWAFNYPGSKNGQATVVGDRLFVTSMSGAVYALNAKTGCVYWRHDAAAATRSSVHVVQLPAGAPAQYAIFFSDWTKAAVALDAQTGKQLWKTTIDDQPGVQMTGSPTYHEGKLFVPISSGNEAFATNDQWECCKFRGALVALDALSGKVLWKTYTTQKEPAPFRLNKLGKQMWGPAGGSIWSAPTIDPKRGLVYVATSNSYTEVHHEGSDAVMAMEIETGKVRWINQVTKDDNYIIGCPRAANCPEKVGPDFALGNSPILHTLQDGRQYIVVGQKSGAVYAMDPDNDGELIWMRRVSPGSELGGVEFGMAADAENVYVGISDVITRKGGKPGVYALRIRDGADVWAFPAPRTPCRWNNIFCHPAVSQAVTAMPGVVFAGSMDGHFRAFSTSDGKVLWEFNTAAAPYKTVAGKQADGGVMDGAGPTIAGGMVYVHSGYAGRSTQNAGDLRGREGNVLIAFSVDGK.

The N-terminal stretch at 1–33 (MQQNIERNQVSMTTSRFVWGAVMALVALGSASA) is a signal peptide. Residues 36–152 (LNLPDGAALY…TPDQWNGWGA (117 aa)) enclose the Cytochrome c domain. Heme is bound by residues Cys-49, Cys-52, and His-53.

Belongs to the bacterial PQQ dehydrogenase family. Monomer. Pyrroloquinoline quinone is required as a cofactor.

It localises to the cytoplasm. It carries out the reaction a polyvinyl alcohol + 2n Fe(III)-[cytochrome c] = an oxidized polyvinyl alcohol + 2n Fe(II)-[cytochrome c] + 2n H(+). Its function is as follows. Catalyzes the oxidation of polyvinyl alcohol (PVA) in the polyvinyl alcohol degradation pathway. The sequence is that of Polyvinylalcohol dehydrogenase (pvaA) from Pseudomonas sp.